Reading from the N-terminus, the 196-residue chain is Imidazoleglycerol-phosphate dehydratase (196 aa).

This sequence belongs to the imidazoleglycerol-phosphate dehydratase family.

It localises to the cytoplasm. The enzyme catalyses D-erythro-1-(imidazol-4-yl)glycerol 3-phosphate = 3-(imidazol-4-yl)-2-oxopropyl phosphate + H2O. It participates in amino-acid biosynthesis; L-histidine biosynthesis; L-histidine from 5-phospho-alpha-D-ribose 1-diphosphate: step 6/9. The protein is Imidazoleglycerol-phosphate dehydratase of Ralstonia nicotianae (strain ATCC BAA-1114 / GMI1000) (Ralstonia solanacearum).